Consider the following 450-residue polypeptide: Glucose-6-phosphate isomerase (450 aa).

E290 serves as the catalytic Proton donor. Residues H311 and K425 contribute to the active site.

The protein belongs to the GPI family.

It is found in the cytoplasm. The catalysed reaction is alpha-D-glucose 6-phosphate = beta-D-fructose 6-phosphate. Its pathway is carbohydrate biosynthesis; gluconeogenesis. The protein operates within carbohydrate degradation; glycolysis; D-glyceraldehyde 3-phosphate and glycerone phosphate from D-glucose: step 2/4. Catalyzes the reversible isomerization of glucose-6-phosphate to fructose-6-phosphate. The sequence is that of Glucose-6-phosphate isomerase from Listeria monocytogenes serovar 1/2a (strain ATCC BAA-679 / EGD-e).